The sequence spans 165 residues: Large ribosomal subunit protein uL11 (165 aa).

This sequence belongs to the universal ribosomal protein uL11 family. In terms of assembly, component of the large ribosomal subunit. Mature ribosomes consist of a small (40S) and a large (60S) subunit. The 40S subunit contains about 32 different proteins and 1 molecule of RNA (18S). The 60S subunit contains 45 different proteins and 3 molecules of RNA (25S, 5.8S and 5S).

The protein localises to the cytoplasm. Functionally, component of the ribosome, a large ribonucleoprotein complex responsible for the synthesis of proteins in the cell. The small ribosomal subunit (SSU) binds messenger RNAs (mRNAs) and translates the encoded message by selecting cognate aminoacyl-transfer RNA (tRNA) molecules. The large subunit (LSU) contains the ribosomal catalytic site termed the peptidyl transferase center (PTC), which catalyzes the formation of peptide bonds, thereby polymerizing the amino acids delivered by tRNAs into a polypeptide chain. The nascent polypeptides leave the ribosome through a tunnel in the LSU and interact with protein factors that function in enzymatic processing, targeting, and the membrane insertion of nascent chains at the exit of the ribosomal tunnel. The protein is Large ribosomal subunit protein uL11 (RPL12) of Candida albicans (strain SC5314 / ATCC MYA-2876) (Yeast).